The chain runs to 345 residues: rRNA 2'-O-methyltransferase fibrillarin (345 aa).

The disordered stretch occupies residues 1 to 114; the sequence is MGKPGFSPRG…GFKGGKTVTI (114 aa). Over residues 8–108 the composition is skewed to gly residues; the sequence is PRGGGGGGGG…RGGGAGGFKG (101 aa). Asymmetric dimethylarginine occurs at positions 9, 23, 25, 41, 43, 49, 52, 59, 64, 72, 78, 84, 89, 94, and 99. Residues 198–199, 217–218, 242–243, and 262–265 each bind S-adenosyl-L-methionine; these read TT, EF, DA, and DVAQ.

This sequence belongs to the methyltransferase superfamily. Fibrillarin family. As to quaternary structure, component of box C/D small nucleolar ribonucleoprotein (snoRNP) particles. It is associated with the U3, U8 and U13 small nuclear RNAs. By homology to other fibrillarins, some or all of the N-terminal domain arginines are modified to asymmetric dimethylarginine (DMA).

Its subcellular location is the nucleus. It is found in the nucleolus. The catalysed reaction is L-glutaminyl-[histone H2A] + S-adenosyl-L-methionine = N(5)-methyl-L-glutaminyl-[histone H2A] + S-adenosyl-L-homocysteine + H(+). S-adenosyl-L-methionine-dependent methyltransferase that has the ability to methylate both RNAs and proteins. Involved in pre-rRNA processing. Utilizes the methyl donor S-adenosyl-L-methionine to catalyze the site-specific 2'-hydroxyl methylation of ribose moieties in pre-ribosomal RNA. Site specificity is provided by a guide RNA that base pairs with the substrate. Methylation occurs at a characteristic distance from the sequence involved in base pairing with the guide RNA. Also acts as a protein methyltransferase by mediating methylation of 'Gln-105' of histone H2A (H2AQ105me), a modification that impairs binding of the FACT complex and is specifically present at 35S ribosomal DNA locus. The protein is rRNA 2'-O-methyltransferase fibrillarin of Drosophila erecta (Fruit fly).